Consider the following 104-residue polypeptide: L-rhamnose mutarotase (104 aa).

Position 18 (Y18) interacts with substrate. H22 (proton donor) is an active-site residue. Substrate contacts are provided by residues Y41 and 76–77 (WW).

The protein belongs to the rhamnose mutarotase family. Homodimer.

The protein resides in the cytoplasm. The enzyme catalyses alpha-L-rhamnose = beta-L-rhamnose. It participates in carbohydrate metabolism; L-rhamnose metabolism. In terms of biological role, involved in the anomeric conversion of L-rhamnose. The polypeptide is L-rhamnose mutarotase (Cronobacter sakazakii (strain ATCC BAA-894) (Enterobacter sakazakii)).